We begin with the raw amino-acid sequence, 232 residues long: 7-cyano-7-deazaguanine synthase (232 aa).

An ATP-binding site is contributed by 8-18 (FSGGQDSTTCL). Cysteine 187, cysteine 196, cysteine 199, and cysteine 202 together coordinate Zn(2+).

This sequence belongs to the QueC family. Zn(2+) serves as cofactor.

It carries out the reaction 7-carboxy-7-deazaguanine + NH4(+) + ATP = 7-cyano-7-deazaguanine + ADP + phosphate + H2O + H(+). The protein operates within purine metabolism; 7-cyano-7-deazaguanine biosynthesis. Its function is as follows. Catalyzes the ATP-dependent conversion of 7-carboxy-7-deazaguanine (CDG) to 7-cyano-7-deazaguanine (preQ(0)). The polypeptide is 7-cyano-7-deazaguanine synthase (Vibrio vulnificus (strain YJ016)).